A 445-amino-acid polypeptide reads, in one-letter code: Exodeoxyribonuclease 7 large subunit (445 aa).

It belongs to the XseA family. In terms of assembly, heterooligomer composed of large and small subunits.

The protein localises to the cytoplasm. The enzyme catalyses Exonucleolytic cleavage in either 5'- to 3'- or 3'- to 5'-direction to yield nucleoside 5'-phosphates.. In terms of biological role, bidirectionally degrades single-stranded DNA into large acid-insoluble oligonucleotides, which are then degraded further into small acid-soluble oligonucleotides. The sequence is that of Exodeoxyribonuclease 7 large subunit from Xanthomonas oryzae pv. oryzae (strain KACC10331 / KXO85).